The chain runs to 148 residues: Small ribosomal subunit protein eS6 (148 aa).

Belongs to the eukaryotic ribosomal protein eS6 family.

This Pyrobaculum aerophilum (strain ATCC 51768 / DSM 7523 / JCM 9630 / CIP 104966 / NBRC 100827 / IM2) protein is Small ribosomal subunit protein eS6.